Consider the following 612-residue polypeptide: T-cell immunomodulatory protein (612 aa).

The first 33 residues, 1-33, serve as a signal peptide directing secretion; the sequence is MAAAGRLPSSWALFSPLLAGLALLGVGPVPARA. N-linked (GlcNAc...) asparagine glycans are attached at residues Asn-36, Asn-95, Asn-139, Asn-146, Asn-151, Asn-176, Asn-188, Asn-226, and Asn-243. The stretch at 258-293 is one FG-GAP; atypical repeat; that stretch reads VVGQSAFADFDGDGHMDHLLPGCEDKNCQKSTIYLV. N-linked (GlcNAc...) asparagine glycans are attached at residues Asn-353, Asn-371, and Asn-482. Residues 567-587 traverse the membrane as a helical segment; that stretch reads VLLTAIALIGVCVFILAIIGI.

It belongs to the TIP family. In terms of assembly, interacts with RUVBL1, RUVBL2 and alpha-tubulin. As to expression, ubiquitously expressed.

It localises to the secreted. The protein resides in the membrane. Functionally, modulator of T-cell function. Has a protective effect in graft versus host disease model. The protein is T-cell immunomodulatory protein of Homo sapiens (Human).